A 1295-amino-acid chain; its full sequence is Phosphoribosylformylglycinamidine synthase (1295 aa).

A disordered region spans residues 305-327; it reads WPGAATGSGGEIRDEGATGRGAK. ATP is bound by residues 307 to 318, 386 to 388, and A678; these read GAATGSGGEIRD and TGY. D679, E718, N722, and D884 together coordinate Mg(2+). Position 886 (S886) interacts with ATP. Residues 1041–1295 enclose the Glutamine amidotransferase type-1 domain; sequence KVAVLREQGG…IFRNARKQLG (255 aa). Catalysis depends on C1135, which acts as the Nucleophile. Active-site residues include H1260 and E1262.

The protein in the N-terminal section; belongs to the FGAMS family. As to quaternary structure, monomer.

The protein resides in the cytoplasm. The enzyme catalyses N(2)-formyl-N(1)-(5-phospho-beta-D-ribosyl)glycinamide + L-glutamine + ATP + H2O = 2-formamido-N(1)-(5-O-phospho-beta-D-ribosyl)acetamidine + L-glutamate + ADP + phosphate + H(+). It functions in the pathway purine metabolism; IMP biosynthesis via de novo pathway; 5-amino-1-(5-phospho-D-ribosyl)imidazole from N(2)-formyl-N(1)-(5-phospho-D-ribosyl)glycinamide: step 1/2. In terms of biological role, phosphoribosylformylglycinamidine synthase involved in the purines biosynthetic pathway. Catalyzes the ATP-dependent conversion of formylglycinamide ribonucleotide (FGAR) and glutamine to yield formylglycinamidine ribonucleotide (FGAM) and glutamate. The sequence is that of Phosphoribosylformylglycinamidine synthase from Salmonella choleraesuis (strain SC-B67).